Consider the following 359-residue polypeptide: MTIKLAIDCMGGDHGVSVTVPAAISFLSSHDDAEMILVGLPDAIGAQLKKLHATDHPRVTVVPATEVITMDDPVEVALRKKKDSSMRVAATQVKEGKADACISAGNTGALMAVSRYVLKTLEGIERPAIATTIPNEQGWGTTVLDLGANADCEPGHLLQFARMADAMVSVVDHKEHPTVGLLNIGEEVIKGNEVVKAAGELLRASELNFYGNVEGNDIFKGTTDIVVCDGFVGNVALKSTEGLAKMIGSMIKEEFTRSWFTKLLAVVAMPVLSRLARRLDPARYNGASLLGLRGLVIKSHGSADAHSFEWAIKRGYDAARNGVIERIARAFAHKSGAGGAATGSPETDAPNPHPDSRAA.

The disordered stretch occupies residues 335 to 359; sequence SGAGGAATGSPETDAPNPHPDSRAA.

The protein belongs to the PlsX family. In terms of assembly, homodimer. Probably interacts with PlsY.

The protein localises to the cytoplasm. The enzyme catalyses a fatty acyl-[ACP] + phosphate = an acyl phosphate + holo-[ACP]. It functions in the pathway lipid metabolism; phospholipid metabolism. Functionally, catalyzes the reversible formation of acyl-phosphate (acyl-PO(4)) from acyl-[acyl-carrier-protein] (acyl-ACP). This enzyme utilizes acyl-ACP as fatty acyl donor, but not acyl-CoA. This Cupriavidus metallidurans (strain ATCC 43123 / DSM 2839 / NBRC 102507 / CH34) (Ralstonia metallidurans) protein is Phosphate acyltransferase.